The sequence spans 52 residues: UPF0057 membrane protein YqaE (52 aa).

Helical transmembrane passes span methionine 1–lysine 21 and phenylalanine 23–isoleucine 43.

Belongs to the UPF0057 (PMP3) family.

It localises to the cell membrane. The protein is UPF0057 membrane protein YqaE (yqaE) of Escherichia coli O157:H7.